The sequence spans 258 residues: Type III pantothenate kinase (258 aa).

9–16 (DIGNTSVN) is an ATP binding site. 110-113 (GADR) contributes to the substrate binding site. The active-site Proton acceptor is the aspartate 112. Aspartate 132 is a K(+) binding site. Residue threonine 135 coordinates ATP. A substrate-binding site is contributed by threonine 187.

The protein belongs to the type III pantothenate kinase family. As to quaternary structure, homodimer. NH4(+) serves as cofactor. K(+) is required as a cofactor.

It is found in the cytoplasm. The catalysed reaction is (R)-pantothenate + ATP = (R)-4'-phosphopantothenate + ADP + H(+). Its pathway is cofactor biosynthesis; coenzyme A biosynthesis; CoA from (R)-pantothenate: step 1/5. Catalyzes the phosphorylation of pantothenate (Pan), the first step in CoA biosynthesis. This is Type III pantothenate kinase from Dehalococcoides mccartyi (strain ATCC BAA-2266 / KCTC 15142 / 195) (Dehalococcoides ethenogenes (strain 195)).